The sequence spans 1047 residues: Jouberin (1047 aa).

Composition is skewed to basic and acidic residues over residues 1–17 (MEQE…EKVR) and 77–86 (LLHDDKLGSE). Disordered stretches follow at residues 1-44 (MEQE…LTEA) and 67-185 (EQLT…SPVH). Positions 1-285 (MEQETPEKVD…IFNENFPYLL (285 aa)) are interaction with HAP1. Basic residues predominate over residues 87 to 96 (KRKKKKKKKV). Positions 116 to 132 (GEQKKEGAPEGSHHREG) are enriched in basic and acidic residues. A compositionally biased stretch (basic residues) spans 150–160 (PKPKKMKKKPK). The segment covering 173-185 (GVHEITGRDSPVH) has biased composition (basic and acidic residues). WD repeat units follow at residues 458-500 (AGER…FMRE), 503-542 (GHLN…TSTF), 546-586 (PHPS…DAAI), 593-632 (VHKS…TDVQ), 649-688 (FRGV…ARKF), 692-731 (ANYR…QVAM), and 736-777 (PFKS…AQQE). S854 carries the post-translational modification Phosphoserine. One can recognise an SH3 domain in the interval 903 to 963 (DPPPMVVALY…PANHVASETL (61 aa)). Basic and acidic residues-rich tracts occupy residues 964-1003 (YRDS…RFLD) and 1012-1040 (GHSE…EPTV). Residues 964-1047 (YRDSPPKVKE…PTVRKVTLIE (84 aa)) form a disordered region. S975 carries the phosphoserine modification.

In terms of assembly, self-associates. Part of the tectonic-like complex (also named B9 complex). Interacts with MKS1. Interacts with NPHP1; probably as heterodimers and/or AHI1(2):NPHP1(2) heterotetramers. Interacts (via SH3 domain) with the dynamin GTPase DNM2. Interacts with HAP1; probably as AHI1(2):HAP1(2) heterotetramers. Interacts with RAB8A. Interacts with CEND1. Interacts with SPATA7.

Its subcellular location is the cytoplasm. It is found in the cytoskeleton. The protein resides in the cilium basal body. It localises to the microtubule organizing center. The protein localises to the centrosome. Its subcellular location is the centriole. It is found in the cell junction. The protein resides in the adherens junction. Involved in vesicle trafficking and required for ciliogenesis, formation of primary non-motile cilium, and recruitment of RAB8A to the basal body of primary cilium. Component of the tectonic-like complex, a complex localized at the transition zone of primary cilia and acting as a barrier that prevents diffusion of transmembrane proteins between the cilia and plasma membranes. Involved in neuronal differentiation. As a positive modulator of classical Wnt signaling, may play a crucial role in ciliary signaling during cerebellum embryonic development. The polypeptide is Jouberin (Ahi1) (Rattus norvegicus (Rat)).